A 440-amino-acid polypeptide reads, in one-letter code: Thymidine phosphorylase (440 aa).

It belongs to the thymidine/pyrimidine-nucleoside phosphorylase family. As to quaternary structure, homodimer.

The enzyme catalyses thymidine + phosphate = 2-deoxy-alpha-D-ribose 1-phosphate + thymine. The protein operates within pyrimidine metabolism; dTMP biosynthesis via salvage pathway; dTMP from thymine: step 1/2. Functionally, the enzymes which catalyze the reversible phosphorolysis of pyrimidine nucleosides are involved in the degradation of these compounds and in their utilization as carbon and energy sources, or in the rescue of pyrimidine bases for nucleotide synthesis. This chain is Thymidine phosphorylase, found in Rhizobium meliloti (strain 1021) (Ensifer meliloti).